The sequence spans 227 residues: MQHDVYDYTAHTVSKNTVLQKTYRLLGFSFIPASAGAALAANAGFNFYAAFGSRWIGFAVVLAFFYGMIHFIEKNRYSNTGVTLLMVFTFGMGVLIGPVLQYALHIADGAKIVGIAAAMTAAVFLTMSALARRTRLDMNALGRFLTVGAVILMVAVVANLFLGIPALALTISAGFVLFSSLMIMWQVRTVIDGGEDSHISAALTLFISLYNIFSSLLNILLSLNGED.

A run of 7 helical transmembrane segments spans residues 25-45, 49-69, 80-100, 111-131, 144-164, 165-185, and 201-221; these read LLGF…NAGF, AAFG…YGMI, TGVT…GPVL, KIVG…SALA, FLTV…FLGI, PALA…MIMW, and AALT…NILL.

It is found in the cell membrane. This is an uncharacterized protein from Neisseria meningitidis serogroup B (strain ATCC BAA-335 / MC58).